The primary structure comprises 384 residues: GTPase Obg (384 aa).

Residues 1–159 enclose the Obg domain; it reads MKFIDEAKIE…RSLQLELKVL (159 aa). A disordered region spans residues 20 to 46; the sequence is ATSFRREKFVPRGGPDGGDGGKGGSVW. Residues 33–43 are compositionally biased toward gly residues; sequence GPDGGDGGKGG. Residues 160 to 348 enclose the OBG-type G domain; the sequence is ADVGLLGMPN…LVHQINQYLT (189 aa). Residues 166–173, 191–195, 213–216, 284–287, and 329–331 contribute to the GTP site; these read GMPNAGKS, FTTLH, DIPG, NKLD, and SAL. Mg(2+) contacts are provided by S173 and T193.

Belongs to the TRAFAC class OBG-HflX-like GTPase superfamily. OBG GTPase family. As to quaternary structure, monomer. Mg(2+) is required as a cofactor.

The protein localises to the cytoplasm. Its function is as follows. An essential GTPase which binds GTP, GDP and possibly (p)ppGpp with moderate affinity, with high nucleotide exchange rates and a fairly low GTP hydrolysis rate. Plays a role in control of the cell cycle, stress response, ribosome biogenesis and in those bacteria that undergo differentiation, in morphogenesis control. This is GTPase Obg from Neisseria meningitidis serogroup C (strain 053442).